The chain runs to 172 residues: Fimbrial-like protein FimF (172 aa).

The signal sequence occupies residues 1 to 21 (MILRRVFIAIGCVLFSPLSQA). Cysteine 41 and cysteine 81 are disulfide-bonded.

It belongs to the fimbrial protein family.

The protein localises to the fimbrium. The protein is Fimbrial-like protein FimF (fimF) of Salmonella typhimurium (strain LT2 / SGSC1412 / ATCC 700720).